A 1337-amino-acid chain; its full sequence is ABC transporter D family member 1 (1337 aa).

A run of 4 helical transmembrane segments spans residues I24–V44, A142–L162, Y247–I267, and F342–S362. Residues V117 to L395 form the ABC transmembrane type-1 1 domain. One can recognise an ABC transporter 1 domain in the interval V448–A695. G481 to S488 lines the ATP pocket. The 299-residue stretch at L751–G1049 folds into the ABC transmembrane type-1 2 domain. Residues L900–F920 traverse the membrane as a helical segment. Residues L1091–E1337 enclose the ABC transporter 2 domain. G1130–T1137 lines the ATP pocket.

The protein belongs to the ABC transporter superfamily. ABCD family. Peroxisomal fatty acyl CoA transporter (TC 3.A.1.203) subfamily.

Its subcellular location is the peroxisome membrane. The protein resides in the glyoxysome membrane. It catalyses the reaction an acyl-CoA(out) + ATP + H2O = an acyl-CoA(in) + ADP + phosphate + H(+). Functionally, contributes to the transport of fatty acids and their derivatives (acyl CoAs) across the peroxisomal membrane. Provides acetate to the glyoxylate cycle in developing seedlings. Involved in pollen tube elongation, ovule fertilization, and seeds germination after imbibition (controls the switch between the opposing developmental programs of dormancy and germination), probably by promoting beta-oxidation of storage lipids during gluconeogenesis. Required for biosynthesis of jasmonic acid and conversion of indole butyric acid to indole acetic acid. Confers sensitivity to monofluoroacetic acid (FAc), a toxic acetate analog, and to 2,4-dichlorophenoxybutyric acid (2,4-DB) and indole-3-butyric acid (IBA), two precursors of auxin after beta-oxidation. In Arabidopsis thaliana (Mouse-ear cress), this protein is ABC transporter D family member 1.